A 78-amino-acid polypeptide reads, in one-letter code: MPTKAGTKSTANKKTTKGSSKSGSPRGHTGKTHAPPSMHSGMLYKDMVNIARSKGIPIYQNGTRLTKSELEKKIRRSK.

Positions 1–24 are enriched in low complexity; the sequence is MPTKAGTKSTANKKTTKGSSKSGS. The tract at residues 1–41 is disordered; the sequence is MPTKAGTKSTANKKTTKGSSKSGSPRGHTGKTHAPPSMHSG.

The protein belongs to the asfivirus P10 family.

It localises to the virion. Its function is as follows. May play a role in genome packaging through direct interaction with viral DNA. Binds to ssDNA and dsDNA with the same apparent affinity in vitro. The sequence is that of Structural DNA-binding protein p10 from African swine fever virus (isolate Tick/South Africa/Pretoriuskop Pr4/1996) (ASFV).